The sequence spans 551 residues: MLYKLLNVLWLVAVSNAIPGTPVIDWADRNYALVEINYEATAYENLIKPKEQVDVQVSWNVWNGDIGDIAYVLFDEQQVWKGDAESKRATIKVLVSGQFNMRVKLCNEDGCSVSDPVLVKVADTDGGHLAPLEYTWLENNKPGRREDKIVAAYFVEWGVYGRNFPVDKVPLPNLSHLLYGFIPICGGDGINDALKTIPGSFESLQRSCKGREDFKVAIHDPWAAVQKPQKGVSAWNEPYKGNFGQLMAAKLANPHLKILPSIGGWTLSDPFYFMHDVEKRNVFVDSVKEFLQVWKFFDGVDIDWEFPGGKGANPSLGDADGDAKTYILLLEELRAMLDDLEAQTGRVYELTSAISAGYDKIAVVNYAEAQKSLGKIFLMSYDFKGAWSNTDLGYQTTVYAPSWNSEELYTTHYAVDALLKQGVDPNKIIVGVAMYGRGWTGVTNYTNDNYFSGTGNGPGSGTWEDGVVDYRQIQKDLNNYVYTFDSAAQASYVFDKSKGDLISFDSVDSVLGKVKYVDRNKLGGLFAWEIDADNGDLLNAINAQFKPKDEL.

A signal peptide spans 1-17; that stretch reads MLYKLLNVLWLVAVSNA. The segment at 1 to 149 is chitin binding domain (CBD); sequence MLYKLLNVLW…NKPGRREDKI (149 aa). The GH18 domain maps to 148-548; the sequence is KIVAAYFVEW…NAINAQFKPK (401 aa). Asn173 carries an N-linked (GlcNAc...) asparagine; by host glycan. Glu305 serves as the catalytic Proton donor. Residue Asn444 is glycosylated (N-linked (GlcNAc...) asparagine; by host). Residues 548–551 carry the Prevents secretion from ER motif; sequence KDEL.

Belongs to the glycosyl hydrolase 18 family. Chitinase class II subfamily. Interacts with host VCATH.

It is found in the host endoplasmic reticulum lumen. It carries out the reaction Random endo-hydrolysis of N-acetyl-beta-D-glucosaminide (1-&gt;4)-beta-linkages in chitin and chitodextrins.. In terms of biological role, plays a role in host liquefaction to facilitate horizontal transmission of the virus by hydrolyzing beta-chitin and by regulating the cysteine protease VCATH. Localized in the host reticulum endoplasmic via its KDEL motif, interacts with and thus prevents VCATH secretion before host cell lysis occurs. The polypeptide is Chitinase (CHIA) (Lepidoptera (butterflies and moths)).